Consider the following 701-residue polypeptide: Acetyl-coenzyme A synthetase, cytoplasmic (701 aa).

The segment covering 1–26 (MGLPEERRKSGSGSRAREETGAEGRV) has biased composition (basic and acidic residues). The segment at 1–37 (MGLPEERRKSGSGSRAREETGAEGRVRGWSPPPEVRR) is disordered. The segment at 1-107 (MGLPEERRKS…GATTNICYNV (107 aa)) is interaction with TFEB. Residue S30 is modified to Phosphoserine. 219 to 222 (RGEK) contacts CoA. Phosphoserine is present on residues S263, S265, and S267. T363 serves as a coordination point for CoA. N6-acetyllysine is present on K418. Residues 439-441 (GEP), 463-468 (DTFWQT), D552, and R567 contribute to the ATP site. Residues S575 and R636 each coordinate CoA. The Nuclear localization signal signature appears at 656–668 (KTRSGKIMRRVLR). At S659 the chain carries Phosphoserine; by AMPK. The residue at position 661 (K661) is an N6-acetyllysine.

The protein belongs to the ATP-dependent AMP-binding enzyme family. As to quaternary structure, monomer. Interacts with TFEB. AMPK-mediated phosphorylated form at Ser-659 interacts with KPNA1; this interaction results in nuclear translocation of ACSS2. Interacts with the 'Thr-172' phosphorylated form of PRKAA2. Interacts with CREBBP. Post-translationally, reversibly acetylated at Lys-661. The acetyl-CoA synthase activity is inhibited by acetylation and activated by deacetylation mediated by the deacetylases SIRT1 and SIRT3. As to expression, expressed in the hippocampus.

Its subcellular location is the cytoplasm. It localises to the cytosol. The protein localises to the nucleus. It carries out the reaction acetate + ATP + CoA = acetyl-CoA + AMP + diphosphate. The catalysed reaction is propanoate + ATP + CoA = propanoyl-CoA + AMP + diphosphate. Its activity is regulated as follows. Inhibited by acetylation at Lys-661 and activated by deacetylation mediated by the deacetylases SIRT1 and SIRT3. Functionally, catalyzes the synthesis of acetyl-CoA from short-chain fatty acids. Acetate is the preferred substrate but can also utilize propionate with a much lower affinity. Nuclear ACSS2 promotes glucose deprivation-induced lysosomal biogenesis and autophagy, tumor cell survival and brain tumorigenesis. Glucose deprivation results in AMPK-mediated phosphorylation of ACSS2 leading to its translocation to the nucleus where it binds to TFEB and locally produces acetyl-CoA for histone acetylation in the promoter regions of TFEB target genes thereby activating their transcription. The regulation of genes associated with autophagy and lysosomal activity through ACSS2 is important for brain tumorigenesis and tumor survival. Acts as a chromatin-bound transcriptional coactivator that up-regulates histone acetylation and expression of neuronal genes. Can be recruited to the loci of memory-related neuronal genes to maintain a local acetyl-CoA pool, providing the substrate for histone acetylation and promoting the expression of specific genes, which is essential for maintaining long-term spatial memory. The polypeptide is Acetyl-coenzyme A synthetase, cytoplasmic (Acss2) (Mus musculus (Mouse)).